A 162-amino-acid chain; its full sequence is MSGLTHFDAAGHAHMVDVGGKQETQRIAIARGTIRMLPATFALIRDGKAKKGDVLGVARIAAIQGAKRTADLIPLCHPLALTRVAVDFELDDALPGVHCVAQVETFGRTGVEMEALTAVQVGLLTVYDMCKAVDRGMVITEVSVREKRGGKSGDWKAEDTAG.

Substrate contacts are provided by residues 75 to 77 (LCH) and 113 to 114 (ME). Asp128 is an active-site residue.

Belongs to the MoaC family. Homohexamer; trimer of dimers.

It catalyses the reaction (8S)-3',8-cyclo-7,8-dihydroguanosine 5'-triphosphate = cyclic pyranopterin phosphate + diphosphate. It functions in the pathway cofactor biosynthesis; molybdopterin biosynthesis. Catalyzes the conversion of (8S)-3',8-cyclo-7,8-dihydroguanosine 5'-triphosphate to cyclic pyranopterin monophosphate (cPMP). This chain is Cyclic pyranopterin monophosphate synthase, found in Burkholderia ambifaria (strain ATCC BAA-244 / DSM 16087 / CCUG 44356 / LMG 19182 / AMMD) (Burkholderia cepacia (strain AMMD)).